The sequence spans 482 residues: Early growth response protein 4 (482 aa).

The disordered stretch occupies residues 274-357 (DLGEGAESLP…PPAKARRKGR (84 aa)). Low complexity predominate over residues 280 to 290 (ESLPGLLTPPS). Residues 291-302 (GEGGSSGEGGEF) are compositionally biased toward gly residues. Positions 337 to 349 (PEPPVPPPAPFPP) are enriched in pro residues. C2H2-type zinc fingers lie at residues 376-400 (FACPVESCVRSFARSDELNRHLRIH), 406-428 (FQCRICLRNFSRSDHLTTHVRTH), and 434-456 (FACDVCGRRFARSDEKKRHSKVH).

It belongs to the EGR C2H2-type zinc-finger protein family. Expressed in brain. In the cerebellum and frontal cortex.

It localises to the nucleus. Functionally, transcriptional regulator. Recognizes and binds to the DNA sequence 5'-GCGGGGGCG-3' (GSG). Activates the transcription of target genes whose products are required for mitogenesis and differentiation. The sequence is that of Early growth response protein 4 (EGR4) from Bos taurus (Bovine).